A 236-amino-acid chain; its full sequence is 1-(5-phosphoribosyl)-5-[(5-phosphoribosylamino)methylideneamino] imidazole-4-carboxamide isomerase (236 aa).

Aspartate 8 functions as the Proton acceptor in the catalytic mechanism. The active-site Proton donor is the aspartate 128.

Belongs to the HisA/HisF family.

Its subcellular location is the cytoplasm. It carries out the reaction 1-(5-phospho-beta-D-ribosyl)-5-[(5-phospho-beta-D-ribosylamino)methylideneamino]imidazole-4-carboxamide = 5-[(5-phospho-1-deoxy-D-ribulos-1-ylimino)methylamino]-1-(5-phospho-beta-D-ribosyl)imidazole-4-carboxamide. It functions in the pathway amino-acid biosynthesis; L-histidine biosynthesis; L-histidine from 5-phospho-alpha-D-ribose 1-diphosphate: step 4/9. This is 1-(5-phosphoribosyl)-5-[(5-phosphoribosylamino)methylideneamino] imidazole-4-carboxamide isomerase from Nitrosopumilus maritimus (strain SCM1).